A 520-amino-acid polypeptide reads, in one-letter code: Sodium-dependent dicarboxylate transporter SdcS (520 aa).

14 helical membrane-spanning segments follow: residues 30 to 50 (AGQL…LLFF), 55 to 75 (LPWK…WWIT), 77 to 97 (AIPI…GHIL), 104 to 124 (SEYG…AIAM), 160 to 180 (SMFV…LAII), 207 to 227 (IGYA…PLII), 242 to 262 (FAKW…ITWL), 298 to 318 (KVVQ…EFLL), 323 to 343 (VTSS…LFII), 362 to 382 (ELPW…KGIS), 399 to 419 (GVSP…LTEV), 428 to 448 (MILP…LLLM), 452 to 472 (AMAA…AIIF), and 491 to 511 (LISA…VLGI).

Belongs to the SLC13A/DASS transporter (TC 2.A.47) family. NADC subfamily.

It localises to the cell membrane. In terms of biological role, mediates the transport of the dicarboxylates fumarate, malate, and succinate across the cytoplasmic membrane via a Na(+)-electrochemical gradient. The sequence is that of Sodium-dependent dicarboxylate transporter SdcS (sdcS) from Staphylococcus aureus (strain NCTC 8325 / PS 47).